We begin with the raw amino-acid sequence, 149 residues long: Calmodulin (149 aa).

4 consecutive EF-hand domains span residues 8–43 (EQIA…LGQN), 44–79 (PTEA…KMKD), 81–116 (DSEE…LGEK), and 117–149 (LTDE…MMSK). Residues aspartate 21, aspartate 23, aspartate 25, threonine 27, glutamate 32, aspartate 57, aspartate 59, asparagine 61, threonine 63, glutamate 68, aspartate 94, aspartate 96, asparagine 98, glutamate 105, aspartate 130, aspartate 132, aspartate 134, glutamine 136, and glutamate 141 each coordinate Ca(2+).

It belongs to the calmodulin family.

Its function is as follows. Calmodulin mediates the control of a large number of enzymes, ion channels and other proteins by Ca(2+). Among the enzymes to be stimulated by the calmodulin-Ca(2+) complex are a number of protein kinases and phosphatases. The sequence is that of Calmodulin from Globisporangium splendens (Leaf rot fungus).